The sequence spans 67 residues: MAKSIEQMIEEIRDRLNLVNQSLIDPDNYKSADEQEIREIHEYVTSKASFTPSEASAIADALGQIRK.

It belongs to the UPF0435 family.

The chain is UPF0435 protein SSP0913 from Staphylococcus saprophyticus subsp. saprophyticus (strain ATCC 15305 / DSM 20229 / NCIMB 8711 / NCTC 7292 / S-41).